The sequence spans 390 residues: MLDSLLDNDFYKFTMQSAVIKRFPYARARYAFINRGEHAFPPGFGEQLREAVDAMADLSLSVEEKRFLERTCPYLDPTYLDFLSGFRYDPSEVDIVQQGERFELRIEGLWYRTILWEVPLMALISEIWYRMGDGKRDADAIIDMRTRDKIEHYKRLGLKIAEFGTRRRYSYDVHDRVVASLRHHGGDTFSGSSNVHLAMRHGVKPIGTHAHEWFMFHGARFGFKMANSLALEHWVDVYRGDLGIALTDTFTSATFFDSFDKKFAKLFDGVRHDSGDPLEFAAATIAHYERMGIDPRTKTIIFSDALTPERVERIDAFCRGRITTAFGIGTNFTNDVGVTPMNMVIKMTEARPEGQHWMPVIKLSDVPDKNTGDPDMIELAKRVLALSRRA.

His-211 carries the phosphohistidine; by autocatalysis modification.

This sequence belongs to the NAPRTase family. Transiently phosphorylated on a His residue during the reaction cycle. Phosphorylation strongly increases the affinity for substrates and increases the rate of nicotinate D-ribonucleotide production. Dephosphorylation regenerates the low-affinity form of the enzyme, leading to product release.

It catalyses the reaction nicotinate + 5-phospho-alpha-D-ribose 1-diphosphate + ATP + H2O = nicotinate beta-D-ribonucleotide + ADP + phosphate + diphosphate. The protein operates within cofactor biosynthesis; NAD(+) biosynthesis; nicotinate D-ribonucleotide from nicotinate: step 1/1. Functionally, catalyzes the synthesis of beta-nicotinate D-ribonucleotide from nicotinate and 5-phospho-D-ribose 1-phosphate at the expense of ATP. The polypeptide is Nicotinate phosphoribosyltransferase (Chromohalobacter salexigens (strain ATCC BAA-138 / DSM 3043 / CIP 106854 / NCIMB 13768 / 1H11)).